The following is a 447-amino-acid chain: Probable glycine dehydrogenase (decarboxylating) subunit 1 (447 aa).

The protein belongs to the GcvP family. N-terminal subunit subfamily. The glycine cleavage system is composed of four proteins: P, T, L and H. In this organism, the P 'protein' is a heterodimer of two subunits.

The enzyme catalyses N(6)-[(R)-lipoyl]-L-lysyl-[glycine-cleavage complex H protein] + glycine + H(+) = N(6)-[(R)-S(8)-aminomethyldihydrolipoyl]-L-lysyl-[glycine-cleavage complex H protein] + CO2. Its function is as follows. The glycine cleavage system catalyzes the degradation of glycine. The P protein binds the alpha-amino group of glycine through its pyridoxal phosphate cofactor; CO(2) is released and the remaining methylamine moiety is then transferred to the lipoamide cofactor of the H protein. This is Probable glycine dehydrogenase (decarboxylating) subunit 1 from Azorhizobium caulinodans (strain ATCC 43989 / DSM 5975 / JCM 20966 / LMG 6465 / NBRC 14845 / NCIMB 13405 / ORS 571).